A 185-amino-acid polypeptide reads, in one-letter code: MLTGAVARRYAQALLEIGIQTKTLDALEGELGRFVEMIGHPELQRFLFHPSIVVAEKKDLVGRLLATGAFSETARAFILLVIDRRRESYFADIFREFVRLANKVRNIEEARVTSAVELAPEQVERLRSQLAAATGKAIVLRMAVDPDLIGGLVVAFGDRIIDGSVAGKIRDLRESLLRSPLPSLS.

This sequence belongs to the ATPase delta chain family. In terms of assembly, F-type ATPases have 2 components, F(1) - the catalytic core - and F(0) - the membrane proton channel. F(1) has five subunits: alpha(3), beta(3), gamma(1), delta(1), epsilon(1). CF(0) has four main subunits: a(1), b(2) and c(10-14). The alpha and beta chains form an alternating ring which encloses part of the gamma chain. F(1) is attached to F(0) by a central stalk formed by the gamma and epsilon chains, while a peripheral stalk is formed by the delta and b chains.

Its subcellular location is the cell membrane. Functionally, f(1)F(0) ATP synthase produces ATP from ADP in the presence of a proton or sodium gradient. F-type ATPases consist of two structural domains, F(1) containing the extramembraneous catalytic core and F(0) containing the membrane proton channel, linked together by a central stalk and a peripheral stalk. During catalysis, ATP synthesis in the catalytic domain of F(1) is coupled via a rotary mechanism of the central stalk subunits to proton translocation. This protein is part of the stalk that links CF(0) to CF(1). It either transmits conformational changes from CF(0) to CF(1) or is implicated in proton conduction. This Heliobacterium modesticaldum (strain ATCC 51547 / Ice1) protein is ATP synthase subunit delta.